Reading from the N-terminus, the 271-residue chain is Indole-3-glycerol phosphate synthase (271 aa).

Belongs to the TrpC family.

It carries out the reaction 1-(2-carboxyphenylamino)-1-deoxy-D-ribulose 5-phosphate + H(+) = (1S,2R)-1-C-(indol-3-yl)glycerol 3-phosphate + CO2 + H2O. Its pathway is amino-acid biosynthesis; L-tryptophan biosynthesis; L-tryptophan from chorismate: step 4/5. This Lachnoclostridium phytofermentans (strain ATCC 700394 / DSM 18823 / ISDg) (Clostridium phytofermentans) protein is Indole-3-glycerol phosphate synthase.